We begin with the raw amino-acid sequence, 452 residues long: uncharacterized protein (452 aa).

It is found in the cytoplasm. The protein localises to the nucleus. This is an uncharacterized protein from Schizosaccharomyces pombe (strain 972 / ATCC 24843) (Fission yeast).